Reading from the N-terminus, the 85-residue chain is UPF0512 protein R (85 aa).

This sequence belongs to the UPF0512 family.

The protein is UPF0512 protein R of Dictyostelium discoideum (Social amoeba).